A 253-amino-acid chain; its full sequence is Phosphoglycerate mutase 2 (253 aa).

Thr-3 is modified (phosphothreonine). Residues 10–17 (RHGESTWN), 23–24 (CG), Arg-62, 89–92 (ERHY), Lys-100, and 116–117 (RR) each bind substrate. The active-site Tele-phosphohistidine intermediate is His-11. The residue at position 14 (Ser-14) is a Phosphoserine. Catalysis depends on Glu-89, which acts as the Proton donor/acceptor. At Ser-118 the chain carries Phosphoserine. Residues Tyr-132 and Tyr-133 each carry the phosphotyrosine modification. The residue at position 135 (Ser-135) is a Phosphoserine. Phosphothreonine is present on Thr-152. 187–188 (GN) lines the substrate pocket.

Belongs to the phosphoglycerate mutase family. BPG-dependent PGAM subfamily. Homodimer. Interacts with ENO1. Expressed in the heart and muscle. Not found in the liver and brain.

It catalyses the reaction (2R)-2-phosphoglycerate = (2R)-3-phosphoglycerate. It carries out the reaction (2R)-3-phospho-glyceroyl phosphate = (2R)-2,3-bisphosphoglycerate + H(+). Functionally, interconversion of 3- and 2-phosphoglycerate with 2,3-bisphosphoglycerate as the primer of the reaction. Can also catalyze the reaction of EC 5.4.2.4 (synthase), but with a reduced activity. The polypeptide is Phosphoglycerate mutase 2 (PGAM2) (Homo sapiens (Human)).